Here is a 797-residue protein sequence, read N- to C-terminus: Inulosucrase (797 aa).

The N-terminal stretch at 1–36 (MLENKNHKKISLSGKSLLMGTLSTAAIVLSASTANA) is a signal peptide. Residues 54 to 64 (ASSVNNENNKQ) are compositionally biased toward polar residues. The disordered stretch occupies residues 54–176 (ASSVNNENNK…SVKPAENATK (123 aa)). Basic and acidic residues-rich tracts occupy residues 65–75 (VTEKDSADKST) and 82–95 (ANTK…ETTE). The span at 130–139 (DQKTTNAATT) shows a compositional bias: low complexity. The span at 140 to 167 (DTKKDDVKQVEKKDSVDKTNAEENKDSS) shows a compositional bias: basic and acidic residues. W271 serves as a coordination point for substrate. Residue D272 is the Nucleophile of the active site. Ca(2+) is bound at residue N317. Residue S340 coordinates substrate. Ca(2+) is bound at residue D419. 424-425 (RD) is a substrate binding site. Ca(2+)-binding residues include Q450, W487, N489, and D521. Substrate-binding positions include 522 to 524 (EIE) and R542. Catalysis depends on E524, which acts as the Proton donor/acceptor. Residues D660, I662, and S667 each contribute to the Ca(2+) site. The tract at residues 708–766 (QPVTPIPNVPTTPETPTTPDKPEVPTTPEVPTTPETPTPEAPKNPVKKTSQSKLPKAGD) is disordered. A compositionally biased stretch (low complexity) spans 718–740 (TTPETPTTPDKPEVPTTPEVPTT). Residues 761-765 (LPKAG) carry the LPXTG sorting signal motif. At A764 the chain carries Pentaglycyl murein peptidoglycan amidated alanine. Positions 765–797 (GDKNSFAAVVLGAVSSILGAVGLTGVSKRKRNN) are cleaved as a propeptide — removed by sortase.

It belongs to the glycosyl hydrolase 68 family. The cofactor is Ca(2+).

The protein localises to the secreted. It localises to the cell wall. It catalyses the reaction [(2-&gt;1)-beta-D-fructosyl](n) + sucrose = [(2-&gt;1)-beta-D-fructosyl](n+1) + D-glucose. Its function is as follows. Fructosyltransferase that catalyzes the polymerization of the fructose moiety of sucrose to produce inulin polymer and inulin oligosaccharides such as 1-kestose and nystose. The sequence is that of Inulosucrase from Lactobacillus johnsonii (strain CNCM I-12250 / La1 / NCC 533).